Reading from the N-terminus, the 584-residue chain is Sulfite reductase [NADPH] hemoprotein beta-component (584 aa).

[4Fe-4S] cluster contacts are provided by C447, C453, C492, and C496. C496 serves as a coordination point for siroheme.

The protein belongs to the nitrite and sulfite reductase 4Fe-4S domain family. Alpha(8)-beta(8). The alpha component is a flavoprotein, the beta component is a hemoprotein. It depends on siroheme as a cofactor. The cofactor is [4Fe-4S] cluster.

The enzyme catalyses hydrogen sulfide + 3 NADP(+) + 3 H2O = sulfite + 3 NADPH + 4 H(+). Its pathway is sulfur metabolism; hydrogen sulfide biosynthesis; hydrogen sulfide from sulfite (NADPH route): step 1/1. Its function is as follows. Component of the sulfite reductase complex that catalyzes the 6-electron reduction of sulfite to sulfide. This is one of several activities required for the biosynthesis of L-cysteine from sulfate. In Colwellia psychrerythraea (strain 34H / ATCC BAA-681) (Vibrio psychroerythus), this protein is Sulfite reductase [NADPH] hemoprotein beta-component.